Here is a 290-residue protein sequence, read N- to C-terminus: MALRQCAIYGKGGIGKSTTTQNLVAALAEAGKKVMIVGCDPKADSTRLILHSKAQGTVMEMAASAGWVEDLELEDVLQIGFGGVKCVESGGPEPGVGCAGRGVITAINFLEEEGAYSDDLDFVFYDVLGDVVCGGFAMPIRENKAQEIYIVCSGEMMAMYAANNIAKGSVKYAHSGSVRLGGLICNSRKTDREDELIMALAAKIGTQMIHFVPRDNVVQHAEIRRMTVIEYDPKAGQADEYRALARKIVDNKLLVIPNPASMEELEELLMEFGIMEVEDESVVGKAAAEG.

10 to 17 (GKGGIGKS) contributes to the ATP binding site. [4Fe-4S] cluster is bound at residue Cys-98. Arg-101 is modified (ADP-ribosylarginine; by dinitrogenase reductase ADP-ribosyltransferase). Cys-133 is a binding site for [4Fe-4S] cluster.

This sequence belongs to the NifH/BchL/ChlL family. Homodimer. Requires [4Fe-4S] cluster as cofactor. The reversible ADP-ribosylation of Arg-101 inactivates the nitrogenase reductase and regulates nitrogenase activity.

The catalysed reaction is N2 + 8 reduced [2Fe-2S]-[ferredoxin] + 16 ATP + 16 H2O = H2 + 8 oxidized [2Fe-2S]-[ferredoxin] + 2 NH4(+) + 16 ADP + 16 phosphate + 6 H(+). In terms of biological role, the key enzymatic reactions in nitrogen fixation are catalyzed by the nitrogenase complex, which has 2 components: the iron protein (component 2) and a component 1 which is either a molybdenum-iron protein, a vanadium-iron, or an iron-iron protein. This is Nitrogenase iron protein 2 (vnfH) from Azotobacter vinelandii.